The following is a 485-amino-acid chain: Sodium-coupled neutral amino acid symporter 1 (485 aa).

The Cytoplasmic portion of the chain corresponds to 1–74; sequence MMHFKSGLEL…EYIPGTTSLG (74 aa). Phosphoserine is present on serine 6. At threonine 11 the chain carries Phosphothreonine. Phosphoserine is present on residues serine 25, serine 28, serine 49, and serine 52. Threonine 54 is subject to Phosphothreonine. A Phosphoserine modification is found at serine 56. The chain crosses the membrane as a helical span at residues 75–97; that stretch reads MSVFNLSNAIMGSGILGLAFALA. The Extracellular segment spans residues 98-112; that stretch reads NTGILLFLILLTSVT. Residues 113 to 133 traverse the membrane as a helical segment; the sequence is LLSIYSINLLLICSKETGCMV. The Cytoplasmic portion of the chain corresponds to 134 to 148; that stretch reads YEKLGEQVFGTTGKL. A helical membrane pass occupies residues 149–169; it reads VIFGATSLQNTGAMLSYLFIV. Topologically, residues 170–188 are extracellular; that stretch reads KNELPSAIKSLMGEEDAFS. The helical transmembrane segment at 189–211 threads the bilayer; sequence AWYVDGRVLVVMVTFGIILPLCL. The Cytoplasmic segment spans residues 212 to 216; sequence LKNLG. The chain crosses the membrane as a helical span at residues 217–237; that stretch reads YLGYTSGFSLSCMMFFLIVVI. At 238 to 273 the chain is on the extracellular side; that stretch reads YKKFQTPCMSVEQNSTVSANVTDACTPKYVTFNSKT. Cysteine 245 and cysteine 262 are joined by a disulfide. N-linked (GlcNAc...) asparagine glycosylation is found at asparagine 251 and asparagine 257. Residues 274 to 294 form a helical membrane-spanning segment; the sequence is VYALPTIAFAFVCHPSVLPIY. At 295-310 the chain is on the cytoplasmic side; it reads SELKDRSQKKMQMVSN. The chain crosses the membrane as a helical span at residues 311–331; the sequence is ISFFAMFVMYFLTAIFGYLTF. The Extracellular portion of the chain corresponds to 332–348; sequence YEKVQSDLLHKYQSTGD. A helical transmembrane segment spans residues 349 to 369; it reads ILILTVRLAVIVAVILTVPVL. Topologically, residues 370 to 391 are cytoplasmic; that stretch reads FFTVRSSLFELAKKTKFHLCRH. A helical transmembrane segment spans residues 392–412; it reads VLVTIILLIIINLLVIFIPSM. The Extracellular portion of the chain corresponds to 413 to 414; it reads KD. A helical membrane pass occupies residues 415-435; that stretch reads IFGVVGVTSANMLIFILPSSL. At 436 to 450 the chain is on the cytoplasmic side; sequence YLKITNQDGDKGTQR. Residues 451-471 form a helical membrane-spanning segment; it reads IWAALFLGLGVLFSLISIPLV. At 472–485 the chain is on the extracellular side; sequence IYDWACSSGTDEGH.

Belongs to the amino acid/polyamine transporter 2 family. In terms of processing, N-glycosylation plays an important role in the L-glutamine transport. Specifically expressed in brain and retina (at protein level). Also detected in spleen, small intestine and lung.

Its subcellular location is the cell membrane. The enzyme catalyses L-glutamine(in) + Na(+)(in) = L-glutamine(out) + Na(+)(out). It carries out the reaction L-alanine(in) + Na(+)(in) = L-alanine(out) + Na(+)(out). The catalysed reaction is L-histidine(in) + Na(+)(in) = L-histidine(out) + Na(+)(out). It catalyses the reaction L-asparagine(in) + Na(+)(in) = L-asparagine(out) + Na(+)(out). The enzyme catalyses L-serine(in) + Na(+)(in) = L-serine(out) + Na(+)(out). It carries out the reaction L-cysteine(in) + Na(+)(in) = L-cysteine(out) + Na(+)(out). The catalysed reaction is L-methionine(in) + Na(+)(in) = L-methionine(out) + Na(+)(out). It catalyses the reaction glycine(in) + Na(+)(in) = glycine(out) + Na(+)(out). The enzyme catalyses L-threonine(in) + Na(+)(in) = L-threonine(out) + Na(+)(out). It carries out the reaction L-proline(in) + Na(+)(in) = L-proline(out) + Na(+)(out). Inhibited by alpha-(methylamino)isobutyric acid (MeAIB). Inhibited by lithium, potassium, choline ions, N-methylglucamine. The pH dependence has an allosteric effect on the transport. In terms of biological role, symporter that cotransports short-chain neutral amino acids and sodium ions from the extraccellular to the intracellular side of the cell membrane. The transport is elctrogenic, pH dependent and driven by the Na(+) electrochemical gradient. Participates in the astroglia-derived glutamine transport into GABAergic interneurons for neurotransmitter GABA de novo synthesis. May also contributes to amino acid transport in placental trophoblast. Regulates synaptic plasticity. In Mus musculus (Mouse), this protein is Sodium-coupled neutral amino acid symporter 1.